A 130-amino-acid polypeptide reads, in one-letter code: Gonadotropin subunit beta-1 (130 aa).

The signal sequence occupies residues 1 to 18 (MRMRFVVMVILLPALMMS). Disulfide bonds link cysteine 26–cysteine 74, cysteine 40–cysteine 89, cysteine 51–cysteine 105, cysteine 55–cysteine 107, and cysteine 110–cysteine 117. Residue asparagine 30 is glycosylated (N-linked (GlcNAc...) asparagine).

It belongs to the glycoprotein hormones subunit beta family. Heterodimer of an alpha and a beta chain.

It is found in the secreted. In terms of biological role, involved in gametogenesis and steroidogenesis. In Carassius auratus (Goldfish), this protein is Gonadotropin subunit beta-1 (cgba).